We begin with the raw amino-acid sequence, 228 residues long: Interleukin-27 subunit beta (228 aa).

Positions 1-18 (MSKLLFLSLALWASRSPG) are cleaved as a signal peptide. 2 Fibronectin type-III domains span residues 26-124 (ALSQ…VAER) and 127-224 (KPDP…VESA). N-linked (GlcNAc...) asparagine glycosylation is found at N54 and N104.

Belongs to the type I cytokine receptor family. Type 3 subfamily. Heterodimer with IL27/IL27A; not disulfide-linked. This heterodimer is known as interleukin IL-27. Heterodimer with IL12A; not disulfide-linked. This heterodimer is known as interleukin IL-35. Interacts with SQSTM1.

The protein resides in the secreted. Functionally, associates with IL27 to form the IL-27 interleukin, a heterodimeric cytokine which functions in innate immunity. IL-27 has pro- and anti-inflammatory properties, that can regulate T-helper cell development, suppress T-cell proliferation, stimulate cytotoxic T-cell activity, induce isotype switching in B-cells, and that has diverse effects on innate immune cells. Among its target cells are CD4 T-helper cells which can differentiate in type 1 effector cells (TH1), type 2 effector cells (TH2) and IL17 producing helper T-cells (TH17). It drives rapid clonal expansion of naive but not memory CD4 T-cells. It also strongly synergizes with IL-12 to trigger interferon-gamma/IFN-gamma production of naive CD4 T-cells, binds to the cytokine receptor WSX-1/TCCR. Another important role of IL-27 is its antitumor activity as well as its antiangiogenic activity with activation of production of antiangiogenic chemokines. This Mus musculus (Mouse) protein is Interleukin-27 subunit beta (Ebi3).